Reading from the N-terminus, the 690-residue chain is Protein O-mannosyl-transferase F38B6.6 (690 aa).

Positions 1–24 (MKKHLHHKVSGSCDPGDRSPKEKG) are disordered. Over 1 to 32 (MKKHLHHKVSGSCDPGDRSPKEKGRSQGIRNL) the chain is Cytoplasmic. Positions 15 to 24 (PGDRSPKEKG) are enriched in basic and acidic residues. The helical transmembrane segment at 33-53 (LILISLSIIPYLSCLGGDFVF) threads the bilayer. Topologically, residues 54 to 110 (DDAESIVNNPIVNGKDPLLQIFSRDFWGRSISSSNSHKSYRPVTTFTFWLNYKLHET) are extracellular. The helical transmembrane segment at 111 to 131 (STLGYHVVNIICHTVATLVFY) threads the bilayer. Topologically, residues 132–138 (KLGKQLE) are cytoplasmic. The helical transmembrane segment at 139–159 (HIFDFFNIAFSASILFAVHPV) threads the bilayer. Over 160-166 (HTEAVAN) the chain is Extracellular. Asn166 carries N-linked (GlcNAc...) asparagine glycosylation. A helical membrane pass occupies residues 167–187 (ITGRAELLMTIFSLAALILHV). Topologically, residues 188-234 (KNREINCKFVLLVILSTLSKEQGLMTIPIAICIDFLAHRSCRSNFVR) are cytoplasmic. The chain crosses the membrane as a helical span at residues 235-255 (MICLLVAIGFLRMMVNGFEAA). Over 256–273 (KFTKLDNPTAFLNSKFYR) the chain is Extracellular. Residues 274–294 (MINYTYIWLYHAYLLVIPVNL) traverse the membrane as a helical segment. Residues 295-307 (CFDYSMGCISSIT) are Cytoplasmic-facing. The helical transmembrane segment at 308–328 (TMWDLRALSPVLIFTIVIIGV) threads the bilayer. Topologically, residues 329–341 (KFQNECRAFTLSS) are extracellular. Residues 342–362 (LMGIISFLPASNIFFTVGFSI) form a helical membrane-spanning segment. At 363-365 (AER) the chain is on the cytoplasmic side. The helical transmembrane segment at 366–386 (VLYLPSAGFCLLCAIIFKKLS) threads the bilayer. Residues 387–690 (VHFKNADVLS…EHNCYNSTLP (304 aa)) lie on the Extracellular side of the membrane. TPR repeat units lie at residues 398–431 (TLIL…CPTN), 432–465 (AKIH…DPSY), 466–499 (EQAL…RPSF), 500–533 (AVAW…RPNS), and 534–567 (AHCL…DPSH). 3 N-linked (GlcNAc...) asparagine glycosylation sites follow: Asn559, Asn600, and Asn617. TPR repeat units lie at residues 602–635 (SRVH…NPTS) and 636–669 (VLFH…DSKN). Residue Asn686 is glycosylated (N-linked (GlcNAc...) asparagine).

It belongs to the TMTC family.

It localises to the membrane. The protein resides in the endoplasmic reticulum. The catalysed reaction is a di-trans,poly-cis-dolichyl beta-D-mannosyl phosphate + L-seryl-[protein] = 3-O-(alpha-D-mannosyl)-L-seryl-[protein] + a di-trans,poly-cis-dolichyl phosphate + H(+). The enzyme catalyses a di-trans,poly-cis-dolichyl beta-D-mannosyl phosphate + L-threonyl-[protein] = 3-O-(alpha-D-mannosyl)-L-threonyl-[protein] + a di-trans,poly-cis-dolichyl phosphate + H(+). It functions in the pathway protein modification; protein glycosylation. Its function is as follows. Transfers mannosyl residues to the hydroxyl group of serine or threonine residues. The polypeptide is Protein O-mannosyl-transferase F38B6.6 (Caenorhabditis elegans).